The sequence spans 344 residues: Serpentine receptor class delta-3 (344 aa).

The next 7 membrane-spanning stretches (helical) occupy residues 21–41 (IIGYIVNPLGILFNTLLIILI), 54–74 (MLHLNFALCDLFSCLAGMLAL), 102–122 (FLHVFVCHCLAHSQWILMISF), 142–162 (ICILTYLPSLLFVIVYWSDVA), 203–223 (FSAIVYMTIPCFPIYGVIVFF), 259–279 (IVPIFWLTASTFYLLALFQVV), and 287–307 (MPFRIMECMPMITPLISLYFV).

Belongs to the nematode receptor-like protein srd family.

The protein localises to the membrane. The protein is Serpentine receptor class delta-3 (srd-3) of Caenorhabditis elegans.